A 94-amino-acid polypeptide reads, in one-letter code: MEIKRTASAGTMESSDIMITVKPSNNGIKIELKSDVEKQFGNQVKKIIKNTIEGMGVKNVYIRAQDRGALDYAIKARTRTALERASKGAEEIEK.

An O-(phosphoribosyl dephospho-coenzyme A)serine modification is found at Ser-14.

Belongs to the CitD family. Oligomer with a subunit composition of (alpha,beta,gamma)6.

It is found in the cytoplasm. In terms of biological role, covalent carrier of the coenzyme of citrate lyase. This Halothermothrix orenii (strain H 168 / OCM 544 / DSM 9562) protein is Citrate lyase acyl carrier protein.